The sequence spans 351 residues: Cytochrome c biogenesis protein CcsA (351 aa).

The next 8 membrane-spanning stretches (helical) occupy residues 12 to 32 (NISF…AAFP), 37 to 57 (LSIL…TLLG), 68 to 88 (ISNL…IHLI), 97 to 117 (LVGV…ALTL), 143 to 163 (MMLS…FLII), 259 to 279 (IIGL…VWAN), 294 to 314 (WALI…TKGW), and 320 to 340 (AILA…VNLL).

The protein belongs to the CcmF/CycK/Ccl1/NrfE/CcsA family. May interact with ccs1.

The protein resides in the cellular thylakoid membrane. Its function is as follows. Required during biogenesis of c-type cytochromes (cytochrome c6 and cytochrome f) at the step of heme attachment. This chain is Cytochrome c biogenesis protein CcsA, found in Trichodesmium erythraeum (strain IMS101).